The chain runs to 470 residues: Aspartyl aminopeptidase (470 aa).

Histidine 92 is a Zn(2+) binding site. Residue histidine 166 coordinates substrate. Aspartate 263 lines the Zn(2+) pocket. Substrate is bound at residue glutamate 299. Zn(2+) contacts are provided by glutamate 300 and aspartate 343. Substrate is bound by residues aspartate 343, histidine 346, lysine 371, and tyrosine 378. Histidine 437 is a binding site for Zn(2+).

Belongs to the peptidase M18 family. Tetrahedron-shaped homododecamer built from six homodimers. It depends on Zn(2+) as a cofactor. In terms of tissue distribution, expressed in various cell types and tissues including the pharynx, neurons, body wall muscle, intestine and vulva.

It is found in the cytoplasm. It localises to the cytosol. The catalysed reaction is Release of an N-terminal aspartate or glutamate from a peptide, with a preference for aspartate.. Aminopeptidase with specificity towards an acidic amino acid at the N-terminus. Plays a role in membrane trafficking and is specifically involved in the recycling and degradation of endocytic cargo. The protein is Aspartyl aminopeptidase of Caenorhabditis elegans.